Here is a 335-residue protein sequence, read N- to C-terminus: tRNA N6-adenosine threonylcarbamoyltransferase (335 aa).

Positions 111 and 115 each coordinate Fe cation. Substrate contacts are provided by residues 133–137 (IISGG), aspartate 166, glycine 179, aspartate 183, and asparagine 268. Aspartate 296 contributes to the Fe cation binding site.

This sequence belongs to the KAE1 / TsaD family. Fe(2+) is required as a cofactor.

Its subcellular location is the cytoplasm. The enzyme catalyses L-threonylcarbamoyladenylate + adenosine(37) in tRNA = N(6)-L-threonylcarbamoyladenosine(37) in tRNA + AMP + H(+). Its function is as follows. Required for the formation of a threonylcarbamoyl group on adenosine at position 37 (t(6)A37) in tRNAs that read codons beginning with adenine. Is involved in the transfer of the threonylcarbamoyl moiety of threonylcarbamoyl-AMP (TC-AMP) to the N6 group of A37, together with TsaE and TsaB. TsaD likely plays a direct catalytic role in this reaction. The chain is tRNA N6-adenosine threonylcarbamoyltransferase from Aquifex aeolicus (strain VF5).